A 311-amino-acid chain; its full sequence is Solute carrier family 25 member 48 (311 aa).

Solcar repeat units lie at residues 3-86 (NFQL…TQRF), 100-205 (PHVL…LSDW), and 214-301 (PSPC…SLQA). Helical transmembrane passes span 9–29 (FVAGWIGGAASVIVGHPLDTV), 61–81 (GMSFPLASIAVYNSVVFGVFS), 107–127 (LLASMVAGVVSVGLGAPVDLI), 193–213 (CLYFIPYVFLSDWITPEACAG), 217–237 (CAVWLAGGMAGAISWGTATPM), and 277–295 (ITVNAVRGFPMSAAMFLGY).

It belongs to the mitochondrial carrier (TC 2.A.29) family.

Its subcellular location is the mitochondrion inner membrane. The polypeptide is Solute carrier family 25 member 48 (SLC25A48) (Bos taurus (Bovine)).